The chain runs to 382 residues: Pectinesterase (382 aa).

Residues 1–16 (MKIIVLLLLAVVLASA) form the signal peptide. A disulfide bond links C153 and C164. An N-linked (GlcNAc...) asparagine glycan is attached at N179. Q193 serves as a coordination point for substrate. Catalysis depends on D216, which acts as the Proton donor. Residue D242 is the Nucleophile of the active site. Substrate contacts are provided by R306 and W308. N340 and N376 each carry an N-linked (GlcNAc...) asparagine glycan.

Belongs to the pectinesterase family. In terms of tissue distribution, expressed throughout the midgut with particularly strong expression in the ventriculus.

It is found in the secreted. It catalyses the reaction [(1-&gt;4)-alpha-D-galacturonosyl methyl ester](n) + n H2O = [(1-&gt;4)-alpha-D-galacturonosyl](n) + n methanol + n H(+). It functions in the pathway glycan metabolism; pectin degradation; 2-dehydro-3-deoxy-D-gluconate from pectin: step 1/5. Pectinesterase which probably plays an important role in the digestion of plant cell walls. This Sitophilus oryzae (Rice weevil) protein is Pectinesterase.